The chain runs to 520 residues: Non-specific phospholipase C6 (520 aa).

Residues 1–31 (MKPSSASRFSLTFSHFLTLYCLLTQTHVAQG) form the signal peptide.

It belongs to the bacterial phospholipase C family. Expressed in roots, leaves, stems, flowers and siliques.

It localises to the secreted. This chain is Non-specific phospholipase C6 (NPC6), found in Arabidopsis thaliana (Mouse-ear cress).